The sequence spans 533 residues: 2-isopropylmalate synthase (533 aa).

The Pyruvate carboxyltransferase domain maps to 8–270 (VIIFDTTLRD…YFNPFLGRPA (263 aa)). Mn(2+) contacts are provided by Asp17, His209, His211, and Asn245. Residues 409–533 (RLELVQVSCG…KEKTPEMLQV (125 aa)) are regulatory domain.

This sequence belongs to the alpha-IPM synthase/homocitrate synthase family. LeuA type 1 subfamily. In terms of assembly, homodimer. The cofactor is Mn(2+).

It localises to the cytoplasm. The enzyme catalyses 3-methyl-2-oxobutanoate + acetyl-CoA + H2O = (2S)-2-isopropylmalate + CoA + H(+). It participates in amino-acid biosynthesis; L-leucine biosynthesis; L-leucine from 3-methyl-2-oxobutanoate: step 1/4. Functionally, catalyzes the condensation of the acetyl group of acetyl-CoA with 3-methyl-2-oxobutanoate (2-ketoisovalerate) to form 3-carboxy-3-hydroxy-4-methylpentanoate (2-isopropylmalate). In Microcystis aeruginosa, this protein is 2-isopropylmalate synthase.